The chain runs to 140 residues: Secreted RxLR effector protein 37 (140 aa).

The signal sequence occupies residues 1-22; that stretch reads MTYRLPFVAVILFVTAKHVVLA. The RxLR-dEER signature appears at 57-76; the sequence is RFLRQLEKKPGVNDKRDEER.

It belongs to the RxLR effector family.

Its subcellular location is the secreted. It is found in the host nucleus. The protein resides in the host cytoplasm. Its function is as follows. Secreted effector that completely suppresses the host cell death induced by cell death-inducing proteins. This Plasmopara viticola (Downy mildew of grapevine) protein is Secreted RxLR effector protein 37.